The chain runs to 410 residues: Multifunctional CCA protein (410 aa).

Glycine 8 and arginine 11 together coordinate ATP. Residues glycine 8 and arginine 11 each coordinate CTP. Residues aspartate 21 and aspartate 23 each coordinate Mg(2+). Residues arginine 91, arginine 138, and arginine 141 each contribute to the ATP site. 3 residues coordinate CTP: arginine 91, arginine 138, and arginine 141. The 119-residue stretch at 229–347 (TGIHQEMVSD…AQLALVCEAD (119 aa)) folds into the HD domain.

Belongs to the tRNA nucleotidyltransferase/poly(A) polymerase family. Bacterial CCA-adding enzyme type 1 subfamily. Monomer. Can also form homodimers and oligomers. The cofactor is Mg(2+). It depends on Ni(2+) as a cofactor.

It carries out the reaction a tRNA precursor + 2 CTP + ATP = a tRNA with a 3' CCA end + 3 diphosphate. The catalysed reaction is a tRNA with a 3' CCA end + 2 CTP + ATP = a tRNA with a 3' CCACCA end + 3 diphosphate. Its function is as follows. Catalyzes the addition and repair of the essential 3'-terminal CCA sequence in tRNAs without using a nucleic acid template. Adds these three nucleotides in the order of C, C, and A to the tRNA nucleotide-73, using CTP and ATP as substrates and producing inorganic pyrophosphate. tRNA 3'-terminal CCA addition is required both for tRNA processing and repair. Also involved in tRNA surveillance by mediating tandem CCA addition to generate a CCACCA at the 3' terminus of unstable tRNAs. While stable tRNAs receive only 3'-terminal CCA, unstable tRNAs are marked with CCACCA and rapidly degraded. The chain is Multifunctional CCA protein from Xanthomonas axonopodis pv. citri (strain 306).